A 968-amino-acid polypeptide reads, in one-letter code: RNA polymerase-associated protein RapA (968 aa).

The 170-residue stretch at 163-332 folds into the Helicase ATP-binding domain; it reads EVGRRYAPRV…FARLRLLDPD (170 aa). 176 to 183 is a binding site for ATP; sequence DEVGLGKT. A DEAH box motif is present at residues 278 to 281; it reads DEAH. Residues 491 to 655 enclose the Helicase C-terminal domain; sequence RVDWLIEFLK…EFAEDLLNVL (165 aa).

It belongs to the SNF2/RAD54 helicase family. RapA subfamily. In terms of assembly, interacts with the RNAP. Has a higher affinity for the core RNAP than for the holoenzyme. Its ATPase activity is stimulated by binding to RNAP.

Its function is as follows. Transcription regulator that activates transcription by stimulating RNA polymerase (RNAP) recycling in case of stress conditions such as supercoiled DNA or high salt concentrations. Probably acts by releasing the RNAP, when it is trapped or immobilized on tightly supercoiled DNA. Does not activate transcription on linear DNA. Probably not involved in DNA repair. The protein is RNA polymerase-associated protein RapA of Shewanella baltica (strain OS223).